The sequence spans 281 residues: Protoheme IX farnesyltransferase (281 aa).

9 consecutive transmembrane segments (helical) span residues 16–36 (TFLL…GADF), 38–58 (FVIA…INMW), 75–95 (VPAG…IFAI), 101–121 (FLVS…DIVV), 129–149 (KSPY…LGGW), 150–170 (VAVQ…LLWI), 202–224 (ASWA…YVLL), 228–250 (IFYL…KFAL), and 261–281 (YKLA…GVFL).

This sequence belongs to the UbiA prenyltransferase family. Protoheme IX farnesyltransferase subfamily.

Its subcellular location is the cell membrane. It catalyses the reaction heme b + (2E,6E)-farnesyl diphosphate + H2O = Fe(II)-heme o + diphosphate. The protein operates within porphyrin-containing compound metabolism; heme O biosynthesis; heme O from protoheme: step 1/1. Converts heme B (protoheme IX) to heme O by substitution of the vinyl group on carbon 2 of heme B porphyrin ring with a hydroxyethyl farnesyl side group. This Archaeoglobus fulgidus (strain ATCC 49558 / DSM 4304 / JCM 9628 / NBRC 100126 / VC-16) protein is Protoheme IX farnesyltransferase.